The following is a 366-amino-acid chain: Homeobox-leucine zipper protein HOX21 (366 aa).

Disordered stretches follow at residues 25–81 (QQAA…SSAQ) and 94–132 (MLGK…EKKR). Over residues 36 to 48 (HHHHHHHGHHGHH) the composition is skewed to basic residues. Residues 62 to 74 (GPPPPPPPHPHNP) are compositionally biased toward pro residues. The segment covering 103–115 (GDGGGGGDEVNGG) has biased composition (gly residues). Positions 127–186 (AGEKKRRLNVEQVRTLEKNFELGNKLEPERKMQLARALGLQPRQVAIWFQNRRARWKTKQ) form a DNA-binding region, homeobox. Residues 185–229 (KQLEKDYDALKRQLDAVKAENDALLNHNKKLQAEIVALKGREAAS) form a leucine-zipper region. Disordered stretches follow at residues 239–287 (EASC…GGGG) and 312–336 (LHSS…VQAA). A compositionally biased stretch (polar residues) spans 240–252 (ASCSNRSENSSEI).

Belongs to the HD-ZIP homeobox family. Class I subfamily. Expressed in seedlings, roots, stems, leaf blades and panicles.

It localises to the nucleus. Probable transcription factor. This is Homeobox-leucine zipper protein HOX21 (HOX21) from Oryza sativa subsp. japonica (Rice).